Here is a 75-residue protein sequence, read N- to C-terminus: UPF0352 protein YejL (75 aa).

Belongs to the UPF0352 family.

This Shigella dysenteriae serotype 1 (strain Sd197) protein is UPF0352 protein YejL.